We begin with the raw amino-acid sequence, 155 residues long: SsrA-binding protein (155 aa).

Belongs to the SmpB family.

The protein localises to the cytoplasm. In terms of biological role, required for rescue of stalled ribosomes mediated by trans-translation. Binds to transfer-messenger RNA (tmRNA), required for stable association of tmRNA with ribosomes. tmRNA and SmpB together mimic tRNA shape, replacing the anticodon stem-loop with SmpB. tmRNA is encoded by the ssrA gene; the 2 termini fold to resemble tRNA(Ala) and it encodes a 'tag peptide', a short internal open reading frame. During trans-translation Ala-aminoacylated tmRNA acts like a tRNA, entering the A-site of stalled ribosomes, displacing the stalled mRNA. The ribosome then switches to translate the ORF on the tmRNA; the nascent peptide is terminated with the 'tag peptide' encoded by the tmRNA and targeted for degradation. The ribosome is freed to recommence translation, which seems to be the essential function of trans-translation. The protein is SsrA-binding protein of Geobacillus sp. (strain WCH70).